A 123-amino-acid polypeptide reads, in one-letter code: ATP synthase epsilon chain (123 aa).

The protein belongs to the ATPase epsilon chain family. As to quaternary structure, F-type ATPases have 2 components, CF(1) - the catalytic core - and CF(0) - the membrane proton channel. CF(1) has five subunits: alpha(3), beta(3), gamma(1), delta(1), epsilon(1). CF(0) has three main subunits: a, b and c.

The protein resides in the cell inner membrane. Produces ATP from ADP in the presence of a proton gradient across the membrane. The protein is ATP synthase epsilon chain of Helicobacter pylori (strain Shi470).